The primary structure comprises 205 residues: dITP/XTP pyrophosphatase (205 aa).

Position 11–16 (11–16 (TKNMGK)) interacts with substrate. Mg(2+) is bound by residues Glu44 and Asp73. Residue Asp73 is the Proton acceptor of the active site. Substrate-binding positions include Ser74, 158–161 (FGYD), Lys181, and 186–187 (HR).

It belongs to the HAM1 NTPase family. Homodimer. It depends on Mg(2+) as a cofactor.

The catalysed reaction is XTP + H2O = XMP + diphosphate + H(+). It catalyses the reaction dITP + H2O = dIMP + diphosphate + H(+). It carries out the reaction ITP + H2O = IMP + diphosphate + H(+). In terms of biological role, pyrophosphatase that catalyzes the hydrolysis of nucleoside triphosphates to their monophosphate derivatives, with a high preference for the non-canonical purine nucleotides XTP (xanthosine triphosphate), dITP (deoxyinosine triphosphate) and ITP. Seems to function as a house-cleaning enzyme that removes non-canonical purine nucleotides from the nucleotide pool, thus preventing their incorporation into DNA/RNA and avoiding chromosomal lesions. This Bacillus cereus (strain ATCC 14579 / DSM 31 / CCUG 7414 / JCM 2152 / NBRC 15305 / NCIMB 9373 / NCTC 2599 / NRRL B-3711) protein is dITP/XTP pyrophosphatase.